The sequence spans 312 residues: MPATLKNSSATLKLNTGASIPVLGFGTWRSVDNNGYHSVIAALKAGYRHIDAAAIYLNEEEVGRAIKDSGVPREEIFITTKLWGTEQRDPEAALNKSLKRLGLDYVDLYLMHWPVPLKTDRVTDGNVLCIPTLEDGTVDIDTKEWNFIKTWELMQELPKTGKTKAVGVSNFSINNIKELLESPNNKVVPATNQIEIHPLLPQDELIAFCKEKGIVVEAYSPFGSANAPLLKEQAIIDMAKKHGVEPAQLIISWSIQRGYVVLAKSVNPERIVSNFKIFTLPEDDFKTISNLSKVHGTKRVVDMKWGSFPIFQ.

Residue Tyr-56 is the Proton donor of the active site. Residue His-112 coordinates substrate. 220–274 (SPFGSANAPLLKEQAIIDMAKKHGVEPAQLIISWSIQRGYVVLAKSVNPERIVSN) contacts NADP(+).

The protein belongs to the aldo/keto reductase family.

The protein localises to the cytoplasm. The enzyme catalyses a primary alcohol + NADP(+) = an aldehyde + NADPH + H(+). The catalysed reaction is 2-methylbutan-1-ol + NADP(+) = 2-methylbutanal + NADPH + H(+). It carries out the reaction hexan-1-ol + NADP(+) = hexanal + NADPH + H(+). Aldehyde reductase with broad substrate specificity, catalyzing the NADPH-dependent reduction of aldehydes into the corresponding alcohols. In vitro, displays high specific activity towards 2-methylbutanal (2-methylbutyraldehyde), as well as other aldehydes such as hexanal (a toxic lipid peroxidation product and phytoalexin), but exhibits extremely low activity as a glycerol dehydrogenase. Seems to contribute to 2-methylbutanal reduction in vivo, and may therefore play a role in isoleucine catabolism and fusel alcohol formation. The chain is Aldehyde reductase YPR1 (YPR1) from Saccharomyces cerevisiae (strain ATCC 204508 / S288c) (Baker's yeast).